A 509-amino-acid polypeptide reads, in one-letter code: MERAENARIIQKPMTRRTVDYGSGLSKYIVNRHLRSNRYHIHVPRPNPNQIINLYPPYEYKYNNTSSLCTKYIHTSANKARHVINVVRWTPDGRRLLTGSSTGEFTLWNGLTFNFELINQSHDYAVRCAEWSTDGRWLISGDGGGMVKYFEPNLNNVKIVQAHEMEVRDVAFSPNDSKFVTASDDGSLKVWNFHMSTEELKLTGHGWDVKTVDWHPSKGLLASGSKDNLVKFWDPRTGTCIATLHGHKNTIMQASFQKNFGSNYLATVSRDSTCRVFDLRAMKDVRVLRGHEKDVNCVTWHPLYPNLLTTGGSDGSVNHYSLDEPPLLSQQKYHEKHPNVTLSASSYLLYPTAEIPFAHDLGIWSMQYHPLGHLLCTGSNDKTTRFWSRSRPDDKESTMDRHHLGEEQSEAMLSQRKAAIEEDDNYEPDENPLTETLANAHNPQFSGVLNLPGLGTMPSFPSPYQHGQPQIPGMLHASLSNSYAEPSTQNSFIPGLTSKSQDGYPQNYR.

WD repeat units follow at residues Tyr-72 to Asn-109, Phe-113 to Glu-151, Asn-156 to Asn-192, Ser-196 to Asp-234, Gly-238 to Asp-278, Met-282 to Ser-321, and Tyr-350 to Ser-388. Disordered stretches follow at residues Arg-385–Ser-409 and Ser-480–Arg-509. Residues Ser-390–Glu-406 are compositionally biased toward basic and acidic residues.

It localises to the nucleus. Its function is as follows. Required for 3'-end cleavage and polyadenylation of pre-mRNAs. Also involved in chromosome segregation where it has a role in chromosome attachment to the mitotic spindle. The polypeptide is Polyadenylation factor subunit 2 (pfs2) (Schizosaccharomyces pombe (strain 972 / ATCC 24843) (Fission yeast)).